Consider the following 464-residue polypeptide: Protein ABHD18 (464 aa).

A signal peptide spans 1-24; the sequence is MGVSKLDILYRRLLLTKLFIRGWG. N341 carries an N-linked (GlcNAc...) asparagine glycan.

The protein belongs to the AB hydrolase superfamily.

It is found in the secreted. The polypeptide is Protein ABHD18 (Mus musculus (Mouse)).